The chain runs to 255 residues: Indole-3-glycerol phosphate synthase (255 aa).

It belongs to the TrpC family.

It catalyses the reaction 1-(2-carboxyphenylamino)-1-deoxy-D-ribulose 5-phosphate + H(+) = (1S,2R)-1-C-(indol-3-yl)glycerol 3-phosphate + CO2 + H2O. It participates in amino-acid biosynthesis; L-tryptophan biosynthesis; L-tryptophan from chorismate: step 4/5. The chain is Indole-3-glycerol phosphate synthase from Streptococcus pneumoniae serotype 2 (strain D39 / NCTC 7466).